The following is a 146-amino-acid chain: Protein disulfide-isomerase 5-1 (146 aa).

Positions Met-1–Ala-25 are cleaved as a signal peptide. The Thioredoxin domain occupies Glu-26–Glu-133. Catalysis depends on nucleophile residues Cys-55 and Cys-58. Cysteines 55 and 58 form a disulfide.

It belongs to the protein disulfide isomerase family.

In terms of biological role, acts as a protein-folding catalyst that interacts with nascent polypeptides to catalyze the formation, isomerization, and reduction or oxidation of disulfide bonds. In Arabidopsis thaliana (Mouse-ear cress), this protein is Protein disulfide-isomerase 5-1 (PDIL5-1).